The primary structure comprises 205 residues: GTP cyclohydrolase 1 (205 aa).

The Zn(2+) site is built by Cys-94, His-97, and Cys-165.

This sequence belongs to the GTP cyclohydrolase I family. In terms of assembly, homomer.

The enzyme catalyses GTP + H2O = 7,8-dihydroneopterin 3'-triphosphate + formate + H(+). The protein operates within cofactor biosynthesis; 7,8-dihydroneopterin triphosphate biosynthesis; 7,8-dihydroneopterin triphosphate from GTP: step 1/1. The chain is GTP cyclohydrolase 1 from Sinorhizobium fredii (strain NBRC 101917 / NGR234).